An 802-amino-acid polypeptide reads, in one-letter code: Outer membrane usher protein CssD (802 aa).

Belongs to the fimbrial export usher family.

It is found in the cell outer membrane. Its function is as follows. Involved in the export and assembly of C6 fimbrial subunits across the outer membrane. In Escherichia coli, this protein is Outer membrane usher protein CssD (cssD).